We begin with the raw amino-acid sequence, 219 residues long: Small ribosomal subunit protein uS3 (219 aa).

One can recognise a KH type-2 domain in the interval 41–110; sequence IRKIINTEYS…DVSINICEVK (70 aa).

The protein belongs to the universal ribosomal protein uS3 family. As to quaternary structure, part of the 30S ribosomal subunit. Forms a tight complex with proteins S10 and S14.

In terms of biological role, binds the lower part of the 30S subunit head. Binds mRNA in the 70S ribosome, positioning it for translation. In Orientia tsutsugamushi (strain Ikeda) (Rickettsia tsutsugamushi), this protein is Small ribosomal subunit protein uS3.